Consider the following 352-residue polypeptide: C-C chemokine receptor type 5 (352 aa).

The Extracellular portion of the chain corresponds to 1 to 30 (MDYQVSSPTYDIDYYTSEPCQKTNVKQIAA). Tyrosine 3 bears the Sulfotyrosine mark. O-linked (GalNAc...) serine glycans are attached at residues serine 6 and serine 7. Sulfotyrosine occurs at positions 10, 14, and 15. 2 disulfide bridges follow: cysteine 20–cysteine 269 and cysteine 101–cysteine 178. Residues 31–58 (RLLPPLYSLVFIFGFVGNMLVILILINC) traverse the membrane as a helical segment. Over 59 to 68 (KRLKSMTDIY) the chain is Cytoplasmic. The chain crosses the membrane as a helical span at residues 69–89 (LLNLAISDLFFLLTVPFWAHY). Topologically, residues 90–102 (AAAQWDFGNTMCQ) are extracellular. Residues 103 to 124 (LLTGLYFIGFFSGIFFIILLTI) form a helical membrane-spanning segment. The Cytoplasmic portion of the chain corresponds to 125–141 (DRYLAIVHAVFALKART). The helical transmembrane segment at 142–166 (VTFGVVTSVITWVVAVFASLPGIIF) threads the bilayer. Topologically, residues 167 to 198 (TRSQKEGLHYTCSSHFPYSQYQFWKNFQTLKI) are extracellular. Residues 199-218 (VILGLVLPLLVMVICYSGIL) traverse the membrane as a helical segment. Residues 219–235 (KTLLRCRNEKKRHRAVR) are Cytoplasmic-facing. The chain crosses the membrane as a helical span at residues 236-260 (LIFTIMIVYFLFWAPYNIVLLLNTF). The Extracellular portion of the chain corresponds to 261-277 (QEFFGLNNCSSSNRLDQ). The helical transmembrane segment at 278-301 (AMQVTETLGMTHCCINPIIYAFVG) threads the bilayer. Residues 302 to 352 (EKFRNYLLVFFQKHIAKRFCKCCSIFQQEAPERASSVYTRSTGEQEISVGL) are Cytoplasmic-facing. 3 S-palmitoyl cysteine lipidation sites follow: cysteine 321, cysteine 323, and cysteine 324. 4 positions are modified to phosphoserine; by BARK1: serine 336, serine 337, serine 342, and serine 349.

Belongs to the G-protein coupled receptor 1 family. In terms of assembly, interacts with PRAF2. Efficient ligand binding to CCL3/MIP-1alpha and CCL4/MIP-1beta requires sulfation, O-glycosylation and sialic acid modifications. Glycosylation on Ser-6 is required for efficient binding of CCL4. Interacts with GRK2. Interacts with ARRB1 and ARRB2. Interacts with CNIH4. Interacts with S100A4; this interaction stimulates T-lymphocyte chemotaxis. Post-translationally, sulfated on at least 2 of the N-terminal tyrosines. Sulfation is required for efficient binding of the chemokines, CCL3 and CCL4. In terms of processing, palmitoylation in the C-terminal is important for cell surface expression. Phosphorylation on serine residues in the C-terminal is stimulated by binding CC chemokines especially by APO-RANTES. Post-translationally, O-glycosylated, but not N-glycosylated. Ser-6 appears to be the major site even if Ser-7 may be also O-glycosylated. Also sialylated glycans present which contribute to chemokine binding. Thr-16 and Ser-17 may also be glycosylated and, if so, with small moieties such as a T-antigen.

The protein localises to the cell membrane. In terms of biological role, receptor for a number of inflammatory CC-chemokines including CCL3/MIP-1-alpha, CCL4/MIP-1-beta and RANTES and subsequently transduces a signal by increasing the intracellular calcium ion level. May play a role in the control of granulocytic lineage proliferation or differentiation. Participates in T-lymphocyte migration to the infection site by acting as a chemotactic receptor. The sequence is that of C-C chemokine receptor type 5 (CCR5) from Gorilla gorilla gorilla (Western lowland gorilla).